The following is a 188-amino-acid chain: Elongation factor P (188 aa).

It belongs to the elongation factor P family.

The protein resides in the cytoplasm. The protein operates within protein biosynthesis; polypeptide chain elongation. In terms of biological role, involved in peptide bond synthesis. Stimulates efficient translation and peptide-bond synthesis on native or reconstituted 70S ribosomes in vitro. Probably functions indirectly by altering the affinity of the ribosome for aminoacyl-tRNA, thus increasing their reactivity as acceptors for peptidyl transferase. The sequence is that of Elongation factor P from Nitrobacter winogradskyi (strain ATCC 25391 / DSM 10237 / CIP 104748 / NCIMB 11846 / Nb-255).